A 271-amino-acid polypeptide reads, in one-letter code: Undecaprenyl-diphosphatase (271 aa).

Helical transmembrane passes span 5 to 25, 45 to 65, 86 to 106, 114 to 134, 149 to 169, 189 to 209, 226 to 246, and 251 to 271; these read YALF…FLPV, AATF…AVFW, TLSL…GLGI, LFGP…LIIA, ISYK…WPGF, AAEF…GLDL, VGFI…LALI, and FIPF…VFVA.

Belongs to the UppP family.

The protein resides in the cell inner membrane. It catalyses the reaction di-trans,octa-cis-undecaprenyl diphosphate + H2O = di-trans,octa-cis-undecaprenyl phosphate + phosphate + H(+). Functionally, catalyzes the dephosphorylation of undecaprenyl diphosphate (UPP). Confers resistance to bacitracin. The polypeptide is Undecaprenyl-diphosphatase (Aeromonas salmonicida (strain A449)).